We begin with the raw amino-acid sequence, 42 residues long: Alpha-lactalbumin I (42 aa).

Residues 1-42 (IDYRKCQASQILKEHGMDKVIPLPELVCTMFHISGLSPQAEV) form the C-type lysozyme domain.

Belongs to the glycosyl hydrolase 22 family. Lactose synthase (LS) is a heterodimer of a catalytic component, beta1,4-galactosyltransferase (beta4Gal-T1) and a regulatory component, alpha-lactalbumin (LA). Mammary gland specific. Secreted in milk.

Its subcellular location is the secreted. Functionally, regulatory subunit of lactose synthase, changes the substrate specificity of galactosyltransferase in the mammary gland making glucose a good acceptor substrate for this enzyme. This enables LS to synthesize lactose, the major carbohydrate component of milk. In other tissues, galactosyltransferase transfers galactose onto the N-acetylglucosamine of the oligosaccharide chains in glycoproteins. The polypeptide is Alpha-lactalbumin I (LALBA) (Macropus giganteus (Eastern gray kangaroo)).